The primary structure comprises 443 residues: Type I restriction enzyme HindI methylase subunit (443 aa).

S-adenosyl-L-methionine-binding positions include 117 to 122, 146 to 148, and E173; these read QYFTPK and SGG.

It belongs to the N(4)/N(6)-methyltransferase family. The type I restriction/modification system is composed of three polypeptides R, M and S; the restriction enzyme has stoichiometry R(2)M(2)S(1) while the methyltransferase is M(2)S(1).

The enzyme catalyses a 2'-deoxyadenosine in DNA + S-adenosyl-L-methionine = an N(6)-methyl-2'-deoxyadenosine in DNA + S-adenosyl-L-homocysteine + H(+). The subtype gamma methyltransferase (M) subunit of a type I restriction enzyme. The M and S subunits together form a methyltransferase (MTase) that methylates adenosines in the sequence 5'-RAACN(5)TAG-3'. Methylation protects against cleavage by HindI. In the presence of the R subunit the complex can also act as an endonuclease, binding to the same target sequence but cutting the DNA some distance from this site. Whether the DNA is cut or modified depends on the methylation state of the target sequence. When the target site is unmodified, the DNA is cut. When the target site is hemimethylated, the complex acts as a maintenance MTase modifying the DNA so that both strands become methylated. After locating a non-methylated recognition site, the enzyme complex serves as a molecular motor that translocates DNA in an ATP-dependent manner until a collision occurs that triggers cleavage. In Haemophilus influenzae (strain ATCC 51907 / DSM 11121 / KW20 / Rd), this protein is Type I restriction enzyme HindI methylase subunit.